The sequence spans 204 residues: Photosystem I reaction center subunit II-2, chloroplastic (204 aa).

The N-terminal 44 residues, 1 to 44 (MATQAAGIFSPAITTTTSAVKKLHLFSSSHRPKSLSFTKTAIRA), are a transit peptide targeting the chloroplast. Position 47 is a phosphothreonine (threonine 47). Residues 47–71 (TESSSAAPAVKEAPVGFTPPQLDPN) are disordered. Residues 137–145 (RLRSKYKIT) are ferredoxin and ferredoxin-oxidoreductase binding.

Belongs to the PsaD family. As to quaternary structure, interacts with CURT1C.

The protein resides in the plastid. It localises to the chloroplast thylakoid membrane. PSAD can form complexes with ferredoxin and ferredoxin-oxidoreductase in photosystem I (PS I) reaction center. PSAD may encode the ferredoxin-docking protein. The sequence is that of Photosystem I reaction center subunit II-2, chloroplastic (PSAD2) from Arabidopsis thaliana (Mouse-ear cress).